A 397-amino-acid chain; its full sequence is Flavohemoprotein (397 aa).

The Globin domain maps to 4 to 140 (SFSPHTITLI…IANLLKDREA (137 aa)). His-87 contacts heme b. Active-site charge relay system residues include Tyr-97 and Glu-139. Residues 151–397 (GGWIHWRRFV…FGPMDEEMAA (247 aa)) are reductase. The 105-residue stretch at 154-258 (IHWRRFVISK…TPPVGDFFLP (105 aa)) folds into the FAD-binding FR-type domain. FAD-binding positions include Tyr-192 and 207 to 210 (RNYS). 271–276 (GVGLTP) is a binding site for NADP(+). Residue 387-390 (FFGP) participates in FAD binding.

Belongs to the globin family. Two-domain flavohemoproteins subfamily. The protein in the C-terminal section; belongs to the flavoprotein pyridine nucleotide cytochrome reductase family. Requires heme b as cofactor. FAD serves as cofactor.

It carries out the reaction 2 nitric oxide + NADPH + 2 O2 = 2 nitrate + NADP(+) + H(+). The enzyme catalyses 2 nitric oxide + NADH + 2 O2 = 2 nitrate + NAD(+) + H(+). Is involved in NO detoxification in an aerobic process, termed nitric oxide dioxygenase (NOD) reaction that utilizes O(2) and NAD(P)H to convert NO to nitrate, which protects the bacterium from various noxious nitrogen compounds. Therefore, plays a central role in the inducible response to nitrosative stress. This is Flavohemoprotein from Xylella fastidiosa (strain 9a5c).